Here is a 157-residue protein sequence, read N- to C-terminus: Pyruvoyl-dependent arginine decarboxylase 1 (157 aa).

Pyruvic acid (Ser) is present on S41.

This sequence belongs to the PdaD family. It depends on pyruvate as a cofactor.

The catalysed reaction is L-arginine + H(+) = agmatine + CO2. The protein is Pyruvoyl-dependent arginine decarboxylase 1 (pdaD1) of Archaeoglobus fulgidus (strain ATCC 49558 / DSM 4304 / JCM 9628 / NBRC 100126 / VC-16).